The following is a 158-amino-acid chain: NADH-quinone oxidoreductase subunit B (158 aa).

Positions 37, 38, 102, and 132 each coordinate [4Fe-4S] cluster.

This sequence belongs to the complex I 20 kDa subunit family. NDH-1 is composed of 14 different subunits. Subunits NuoB, C, D, E, F, and G constitute the peripheral sector of the complex. It depends on [4Fe-4S] cluster as a cofactor.

The protein resides in the cell inner membrane. It carries out the reaction a quinone + NADH + 5 H(+)(in) = a quinol + NAD(+) + 4 H(+)(out). In terms of biological role, NDH-1 shuttles electrons from NADH, via FMN and iron-sulfur (Fe-S) centers, to quinones in the respiratory chain. The immediate electron acceptor for the enzyme in this species is believed to be ubiquinone. Couples the redox reaction to proton translocation (for every two electrons transferred, four hydrogen ions are translocated across the cytoplasmic membrane), and thus conserves the redox energy in a proton gradient. This is NADH-quinone oxidoreductase subunit B from Halorhodospira halophila (strain DSM 244 / SL1) (Ectothiorhodospira halophila (strain DSM 244 / SL1)).